The following is a 429-amino-acid chain: Glutamate-1-semialdehyde 2,1-aminomutase 2 (429 aa).

An N6-(pyridoxal phosphate)lysine modification is found at K268.

Belongs to the class-III pyridoxal-phosphate-dependent aminotransferase family. HemL subfamily. In terms of assembly, homodimer. Pyridoxal 5'-phosphate is required as a cofactor.

It localises to the cytoplasm. The catalysed reaction is (S)-4-amino-5-oxopentanoate = 5-aminolevulinate. Its pathway is porphyrin-containing compound metabolism; protoporphyrin-IX biosynthesis; 5-aminolevulinate from L-glutamyl-tRNA(Glu): step 2/2. The sequence is that of Glutamate-1-semialdehyde 2,1-aminomutase 2 from Staphylococcus epidermidis (strain ATCC 35984 / DSM 28319 / BCRC 17069 / CCUG 31568 / BM 3577 / RP62A).